Here is a 229-residue protein sequence, read N- to C-terminus: Uracil-DNA glycosylase (229 aa).

Residue Asp-64 is the Proton acceptor of the active site.

It belongs to the uracil-DNA glycosylase (UDG) superfamily. UNG family.

It is found in the cytoplasm. The enzyme catalyses Hydrolyzes single-stranded DNA or mismatched double-stranded DNA and polynucleotides, releasing free uracil.. Excises uracil residues from the DNA which can arise as a result of misincorporation of dUMP residues by DNA polymerase or due to deamination of cytosine. The polypeptide is Uracil-DNA glycosylase (Escherichia coli O81 (strain ED1a)).